The following is a 347-amino-acid chain: Chlorophyllase type 0 (347 aa).

An N-terminal signal peptide occupies residues Met-1–Ala-19. A propeptide spanning residues Gln-20–Asn-30 is cleaved from the precursor. Positions Gly-160 to Gly-164 match the GXSXG motif. The Nucleophile role is filled by Ser-162. The Charge relay system role is filled by Asp-191. N-linked (GlcNAc...) asparagine glycans are attached at residues Asn-215, Asn-229, and Asn-251. His-262 serves as the catalytic Charge relay system. An N-linked (GlcNAc...) asparagine glycan is attached at Asn-321.

This sequence belongs to the AB hydrolase superfamily. Lipase family.

The catalysed reaction is a chlorophyll + H2O = a chlorophyllide + phytol + H(+). It carries out the reaction chlorophyll a + H2O = phytol + chlorophyllide a + H(+). It participates in porphyrin-containing compound metabolism; chlorophyll degradation. Its activity is regulated as follows. Inhibited by diisopropyl fluorophosphate (DFP), phenylmethanesulfonyl fluoride (PMSF) or p-chloromercuribenzoic acid (PCMB), but not by N-ethylmaleimide (NEM) or iodoacetamide. Functionally, catalyzes the hydrolysis of ester bond in chlorophyll to yield chlorophyllide and phytol. The chain is Chlorophyllase type 0 from Chenopodium album (Fat hen).